A 213-amino-acid chain; its full sequence is Gas vesicle protein F (213 aa).

Belongs to the gas vesicle GvpF/GvpL family. Binds GvpA.

The protein resides in the gas vesicle. Functionally, a minor component of the gas vesicle, may be involved in preventing GvpA aggregation during gas vesicle nucleation. Gas vesicles are hollow, gas filled proteinaceous nanostructures found in some microorganisms. They allow positioning of halobacteria at the optimal depth for growth in the poorly aerated, shallow brine pools of their habitat. In terms of biological role, expression of a 9.5 kb mc-vac DNA fragment containing 2 divergently transcribed regions (gvpD-gvpE-gvpF-gvpG-gvpH-gvpI-gvpJ-gvpK-gvpL-gvpM and gvpA-gvpC-gvpN-gvpO) allows H.volcanii to produce gas vesicles. The sequence is that of Gas vesicle protein F from Haloferax mediterranei (strain ATCC 33500 / DSM 1411 / JCM 8866 / NBRC 14739 / NCIMB 2177 / R-4) (Halobacterium mediterranei).